The primary structure comprises 530 residues: Regulatory protein LuxO (530 aa).

The 230-residue stretch at 194–423 (IIGNSGPMLA…LEHVINRAAL (230 aa)) folds into the Sigma-54 factor interaction domain. ATP contacts are provided by residues 222-229 (GETGVGKE) and 285-294 (ADGGTLFLDE).

Its function is as follows. Involved in the regulation of different processes depending on the cell density. Acts together with sigma-54 to repress, perhaps indirectly, some genes. This Vibrio cholerae serotype O1 (strain ATCC 39541 / Classical Ogawa 395 / O395) protein is Regulatory protein LuxO (luxO).